An 87-amino-acid chain; its full sequence is Small ribosomal subunit protein bS20 (87 aa).

Residues 1–22 (MANIKSQIKRNKTNEKARLRNQ) are disordered.

Belongs to the bacterial ribosomal protein bS20 family.

Its function is as follows. Binds directly to 16S ribosomal RNA. This chain is Small ribosomal subunit protein bS20, found in Corynebacterium glutamicum (strain R).